The primary structure comprises 663 residues: Protein associated with UVRAG as autophagy enhancer (663 aa).

Disordered stretches follow at residues 1-36 (MVSQ…LDTE) and 65-136 (DASP…EERA). 2 stretches are compositionally biased toward polar residues: residues 80–93 (TASN…TSPL) and 105–130 (PKGT…SSVT). The tract at residues 196–235 (EAFVLPVDAEKENAHFYVADMIISVMEKMKCNILSQQHTE) is interaction with UVRAG. Lys-484, Lys-534, Lys-574, and Lys-634 each carry N6-acetyllysine.

Interacts with UVRAG; the interaction is direct and promotes association with the PI3K/PI3KC3 and HOPS complexes. Interacts with STX17. Acetylated by KAT5/TIP60 under autophagy induction, promoting autophagosome maturation and lipid metabolism. Lys-484 and Lys-574 constitute the key sites for tuning function in autophagy.

The protein localises to the cytoplasmic vesicle. It is found in the autophagosome membrane. Its function is as follows. Regulator of autophagy that promotes autophagosome maturation by facilitating the biogenesis of phosphatidylinositol 3-phosphate (PtdIns(3)P) in late steps of autophagy. Acts by antagonizing RUBCN, thereby stimulating phosphatidylinositol 3-kinase activity of the PI3K/PI3KC3 complex. Following anchorage to the autophagosomal SNARE STX17, promotes the recruitment of PI3K/PI3KC3 and HOPS complexes to the autophagosome to regulate the fusion specificity of autophagosomes with late endosomes/lysosomes. Binds phosphoinositides phosphatidylinositol 3-phosphate (PtdIns(3)P), 4-phosphate (PtdIns(4)P) and 5-phosphate (PtdIns(5)P). In addition to its role in autophagy, acts as a regulator of lipid and glycogen homeostasis. May act as a tumor suppressor. This is Protein associated with UVRAG as autophagy enhancer from Bos taurus (Bovine).